Here is a 23-residue protein sequence, read N- to C-terminus: Acidic phospholipase A2 Ts-A2 (23 aa).

Ca(2+) serves as cofactor. In terms of processing, contains 7 disulfide bonds. In terms of tissue distribution, expressed by the venom gland.

It localises to the secreted. The enzyme catalyses a 1,2-diacyl-sn-glycero-3-phosphocholine + H2O = a 1-acyl-sn-glycero-3-phosphocholine + a fatty acid + H(+). In terms of biological role, exhibits moderate hydrolytic activities and prefers the anionic micelles (dPPC with deoxycholate) to the zwitterionic micelles (dPPC with Triton X-100). PLA2 catalyzes the calcium-dependent hydrolysis of the 2-acyl groups in 3-sn-phosphoglycerides. This is Acidic phospholipase A2 Ts-A2 from Trimeresurus stejnegeri (Chinese green tree viper).